A 6874-amino-acid chain; its full sequence is Nesprin-2 (6874 aa).

The tract at residues 1 to 286 (MAASPVLPTE…MTYVAQFLKY (286 aa)) is actin-binding. The Cytoplasmic portion of the chain corresponds to 1–6823 (MAASPVLPTE…RRSFLSRVIR (6823 aa)). 2 Calponin-homology (CH) domains span residues 31 to 136 (DTQK…LHFH) and 183 to 288 (WSAK…KYSK). Spectrin repeat units follow at residues 299-380 (AKVR…HQVA), 381-474 (AWRA…RINN), 475-577 (VLGK…QYIH), and 578-680 (NTKA…IQDQ). Positions 299–6767 (AKVRDALVWL…PDASLTSFDE (6469 aa)) form a coiled coil. The disordered stretch occupies residues 675 to 723 (VKIQDQPPGNSSGTSLSKESAMAAEPGGSRGEDVKAAEKQEVEDEESAG). The span at 681–692 (PPGNSSGTSLSK) shows a compositional bias: polar residues. Basic and acidic residues predominate over residues 704-714 (RGEDVKAAEKQ). Spectrin repeat units follow at residues 727-834 (VNEE…KNLS), 835-928 (DEPL…LRHE), 929-1030 (ISLY…KCAS), 1120-1211 (TQRG…LLNT), 1262-1322 (DIRD…DALD), 1323-1409 (ALEG…QSKE), 1410-1514 (EGPP…ASVT), 1515-1626 (ESLE…KTEE), 1627-1728 (YGEN…AGGS), 1729-1820 (NSYA…TKKN), 1821-1928 (ALQD…AGEL), 1929-2026 (NNSF…EEED), 2027-2122 (KLPA…LANT), 2123-2233 (YLSH…SVQK), 2234-2350 (LEGH…LNSI), 2422-2503 (DERE…TLKK), 2504-2610 (TKER…KCFQ), 2611-2707 (QATE…EALE), 2708-2821 (PLNR…QLEL), 2822-2923 (KLEE…FLQN), 2924-3027 (NGSE…GKIK), 3028-3133 (QLDT…NMLL), 3134-3239 (ELQP…SLRA), 3240-3343 (DVLN…AQEA), 3344-3456 (EEER…QWGG), 3457-3563 (ELKR…TTRK), 3564-3669 (NKDL…SSEV), 3670-3767 (SKSS…ESRT), 3768-3870 (SQLN…QIME), 3871-3976 (ALPH…VTQE), and 3977-4074 (QNEL…KPSA). The segment at 2338–2397 (SAKQETENGLNSILKSKSSTEKHVKFSLPVEEMPATSEVPKPTRESAAVGESGGARETNT) is disordered. Residues 2344–2354 (ENGLNSILKSK) show a composition bias toward polar residues. Disordered stretches follow at residues 4062–4152 (KQEQ…ATIV), 4171–4193 (APDS…TDEG), 4326–4348 (FSED…DQPA), and 4401–4429 (HQEN…DSTL). Residues 4081–4091 (VAERDASERKL) are compositionally biased toward basic and acidic residues. Position 4096 is a phosphoserine (serine 4096). The span at 4110-4122 (SSVKSEDGRRRTE) shows a compositional bias: basic and acidic residues. A Spectrin 36 repeat occupies 4218-4337 (RSRPRPADIL…EDQHPSTLKK (120 aa)). Over residues 4326–4345 (FSEDQHPSTLKKPSEPHDVD) the composition is skewed to basic and acidic residues. The segment covering 4409–4429 (RQSASSSKVPSPGNAASDSTL) has biased composition (polar residues). Spectrin repeat units follow at residues 4507 to 4626 (SMTE…RSYQ), 4627 to 4714 (NEVK…RARY), 4715 to 4823 (LELS…QSML), 4824 to 4929 (QKWE…QTLL), 4930 to 5037 (KHLL…QEKL), 5038 to 5150 (HQLQ…KIQH), 5151 to 5252 (LEQL…SQVH), 5253 to 5377 (QLRA…KAPH), 5378 to 5473 (NAHA…MLLA), 5474 to 5576 (KSNE…YSEL), 5577 to 5691 (QGNG…QWRF), 5692 to 5786 (FTTS…LSLG), 5787 to 5894 (EVIS…RVAI), 5895 to 6004 (RKQE…VKKL), 6005 to 6122 (KETF…EETW), 6123 to 6230 (RLWQ…LRYF), and 6231 to 6342 (TNQR…PGLD). Positions 5435-5459 (NSTLSDQLPQPEERSTPGLHSGQRH) are disordered. Serine 5772 is modified (phosphoserine). The interval 6336–6473 (SHTPGLDDEK…TEAPVPTDAS (138 aa)) is disordered. The span at 6341–6354 (LDDEKEASENETDI) shows a compositional bias: acidic residues. A phosphoserine mark is found at serine 6348, serine 6371, serine 6400, serine 6417, serine 6418, serine 6419, and serine 6448. Basic and acidic residues predominate over residues 6355–6372 (EDPREIQADSWRKRRESE). Spectrin repeat units follow at residues 6450–6534 (SHSK…KLRL), 6535–6650 (KQTV…QCQD), and 6651–6767 (FHQL…SFDE). Residues 6790-6812 (EEEEEEEETDSRMPHLDSPGSSQ) form a disordered region. Residues 6815–6874 (RSFLSRVIRAALPLQLLLLLLLLLACLLPASEDDYSCTQANNFARSFYPMLRYTNGPPPT) form the KASH domain. The chain crosses the membrane as a helical; Anchor for type IV membrane protein span at residues 6824–6844 (AALPLQLLLLLLLLLACLLPA). The Perinuclear space portion of the chain corresponds to 6845 to 6874 (SEDDYSCTQANNFARSFYPMLRYTNGPPPT). Residues 6861–6874 (FYPMLRYTNGPPPT) form a sufficient for interaction with SUN2 region.

It belongs to the nesprin family. Core component of LINC complexes which are composed of inner nuclear membrane SUN domain-containing proteins coupled to outer nuclear membrane KASH domain-containing nesprins. SUN and KASH domain-containing proteins seem to bind each other promiscuously; however, some LINC complex constituents are tissue- or cell type-specific. At least SUN1/2-containing core LINC complexes are proposed to be hexameric composed of three protomers of each KASH and SUN domain-containing protein. The SUN2:SYNE2/KASH2 complex is a heterohexamer; the homotrimeric cloverleave-like conformation of the SUN domain is a prerequisite for LINC complex formation in which three separate SYNE2/KASH2 peptides bind at the interface of adjacent SUN domains. Interacts with EMD, LMNA, MKS3 and F-actin via its N-terminal domain. Interacts with DCTN1 and DYNC1I1/2; suggesting the association with the dynein-dynactin motor complex. Associates with kinesin motor complexes. Interacts with TMEM67. Interacts (via KASH domain) with TMEM258. Interacts with BROX; this interaction promotes SYN2 ubiquitination and facilitates the relaxation of mechanical stress imposed by compressive actin fibers at the rupture site. Post-translationally, the disulfid bond with SUN2 is required for stability of the SUN2:SYNE2/KASH2 LINC complex under tensile forces though not required for the interaction. As to expression, C-terminal isoforms are highly expressed in the brain, hert and skeletal muscle. Isoform 1 (Nesprin-2 Giant) is most prevalent in the brain, skin, kidney and skeletal muscle.

The protein localises to the nucleus outer membrane. It is found in the sarcoplasmic reticulum membrane. The protein resides in the cell membrane. Its subcellular location is the cytoplasm. It localises to the cytoskeleton. The protein localises to the mitochondrion. It is found in the nucleus. The protein resides in the nucleoplasm. In terms of biological role, multi-isomeric modular protein which forms a linking network between organelles and the actin cytoskeleton to maintain the subcellular spatial organization. As a component of the LINC (LInker of Nucleoskeleton and Cytoskeleton) complex involved in the connection between the nuclear lamina and the cytoskeleton. The nucleocytoplasmic interactions established by the LINC complex play an important role in the transmission of mechanical forces across the nuclear envelope and in nuclear movement and positioning. Specifically, SYNE2 and SUN2 assemble in arrays of transmembrane actin-associated nuclear (TAN) lines which are bound to F-actin cables and couple the nucleus to retrograde actin flow during actin-dependent nuclear movement. May be involved in nucleus-centrosome attachment. During interkinetic nuclear migration (INM) at G2 phase and nuclear migration in neural progenitors its LINC complex association with SUN1/2 and probable association with cytoplasmic dynein-dynactin motor complexes functions to pull the nucleus toward the centrosome; SYNE1 and SYNE2 seem to act redundantly in cerebellum, midbrain, brain stem, and other brain regions except cerebral cortex and hippocampus. During INM at G1 phase mediates respective LINC complex association with kinesin to push the nucleus away from the centrosome. Involved in nuclear migration in retinal photoreceptor progenitors. Required for centrosome migration to the apical cell surface during early ciliogenesis. This chain is Nesprin-2, found in Mus musculus (Mouse).